The primary structure comprises 434 residues: D-amino acid dehydrogenase (434 aa).

Position 3–17 (3–17) interacts with FAD; sequence VLVLGSGVIGTASAY.

It belongs to the DadA oxidoreductase family. The cofactor is FAD.

It catalyses the reaction a D-alpha-amino acid + A + H2O = a 2-oxocarboxylate + AH2 + NH4(+). It participates in amino-acid degradation; D-alanine degradation; NH(3) and pyruvate from D-alanine: step 1/1. Functionally, oxidative deamination of D-amino acids. This chain is D-amino acid dehydrogenase, found in Pseudomonas putida (strain GB-1).